Consider the following 51-residue polypeptide: uncharacterized protein (51 aa).

A coiled-coil region spans residues 3–30 (EEKAVSLAKEIIELDIKRDEMLETFMQL).

This is an uncharacterized protein from Bacillus subtilis (strain 168).